We begin with the raw amino-acid sequence, 296 residues long: Protoheme IX farnesyltransferase (296 aa).

9 consecutive transmembrane segments (helical) span residues Leu29–Ala49, Ala54–Met74, Phe98–Val118, Pro121–Met141, Leu147–Ala167, Gly175–Ile195, Trp221–Val241, Tyr246–Gly266, and Asn275–Ala295.

This sequence belongs to the UbiA prenyltransferase family. Protoheme IX farnesyltransferase subfamily.

The protein localises to the cell inner membrane. It catalyses the reaction heme b + (2E,6E)-farnesyl diphosphate + H2O = Fe(II)-heme o + diphosphate. Its pathway is porphyrin-containing compound metabolism; heme O biosynthesis; heme O from protoheme: step 1/1. Converts heme B (protoheme IX) to heme O by substitution of the vinyl group on carbon 2 of heme B porphyrin ring with a hydroxyethyl farnesyl side group. The sequence is that of Protoheme IX farnesyltransferase from Anaeromyxobacter sp. (strain Fw109-5).